The primary structure comprises 88 residues: Small ribosomal subunit protein bS20 (88 aa).

The tract at residues 1–25 (MANSAQARKRARQAVAQNAHNSSLR) is disordered.

The protein belongs to the bacterial ribosomal protein bS20 family.

In terms of biological role, binds directly to 16S ribosomal RNA. This chain is Small ribosomal subunit protein bS20, found in Cupriavidus pinatubonensis (strain JMP 134 / LMG 1197) (Cupriavidus necator (strain JMP 134)).